Consider the following 337-residue polypeptide: uncharacterized protein (337 aa).

The 231-residue stretch at 5–235 (VEFDNVSRLY…PRTPFVAGFV (231 aa)) folds into the ABC transporter domain. 37–44 (GPSGSGKT) is a binding site for ATP.

It belongs to the ABC transporter superfamily.

Functionally, probably part of the ABC transporter complex YdcSTUV. Probably responsible for energy coupling to the transport system. This is an uncharacterized protein from Escherichia coli (strain K12).